A 154-amino-acid chain; its full sequence is 6,7-dimethyl-8-ribityllumazine synthase (154 aa).

5-amino-6-(D-ribitylamino)uracil-binding positions include Phe26, 60–62, and 84–86; these read ALE and CII. 89-90 lines the (2S)-2-hydroxy-3-oxobutyl phosphate pocket; the sequence is ET. Residue His92 is the Proton donor of the active site. Asn117 provides a ligand contact to 5-amino-6-(D-ribitylamino)uracil. Arg131 contributes to the (2S)-2-hydroxy-3-oxobutyl phosphate binding site.

The protein belongs to the DMRL synthase family.

The enzyme catalyses (2S)-2-hydroxy-3-oxobutyl phosphate + 5-amino-6-(D-ribitylamino)uracil = 6,7-dimethyl-8-(1-D-ribityl)lumazine + phosphate + 2 H2O + H(+). Its pathway is cofactor biosynthesis; riboflavin biosynthesis; riboflavin from 2-hydroxy-3-oxobutyl phosphate and 5-amino-6-(D-ribitylamino)uracil: step 1/2. In terms of biological role, catalyzes the formation of 6,7-dimethyl-8-ribityllumazine by condensation of 5-amino-6-(D-ribitylamino)uracil with 3,4-dihydroxy-2-butanone 4-phosphate. This is the penultimate step in the biosynthesis of riboflavin. The polypeptide is 6,7-dimethyl-8-ribityllumazine synthase (Acidovorax sp. (strain JS42)).